Here is a 297-residue protein sequence, read N- to C-terminus: uncharacterized protein (297 aa).

Transmembrane regions (helical) follow at residues 114 to 136 (YNRW…LSSG), 150 to 170 (LLYD…VFNV), 197 to 217 (MPIV…GVHL), 227 to 247 (AFTV…KAMI), and 269 to 289 (FINT…PGLL).

The protein belongs to the ThrE exporter (TC 2.A.79) family.

It localises to the cell inner membrane. This is an uncharacterized protein from Haemophilus influenzae (strain ATCC 51907 / DSM 11121 / KW20 / Rd).